Reading from the N-terminus, the 500-residue chain is Maturase K (500 aa).

This sequence belongs to the intron maturase 2 family. MatK subfamily.

The protein resides in the plastid. The protein localises to the chloroplast. Functionally, usually encoded in the trnK tRNA gene intron. Probably assists in splicing its own and other chloroplast group II introns. This is Maturase K from Adiantum capillus-veneris (Maidenhair fern).